The chain runs to 2155 residues: Conidial pigment polyketide synthase PfmaE (2155 aa).

An N-terminal acylcarrier protein transacylase domain (SAT) region spans residues 8-245 (LLFGDQSLDT…TAIPVYGPYH (238 aa)). The Ketosynthase family 3 (KS3) domain occupies 381–813 (KCKLAIVGMA…GGNTGLLLED (433 aa)). Active-site for beta-ketoacyl synthase activity residues include cysteine 553, histidine 688, and histidine 731. The segment at 910–1231 (AFMFTGQGSH…LCTLHSAGLN (322 aa)) is malonyl-CoA:ACP transacylase (MAT) domain. The active-site For acyl/malonyl transferase activity is the serine 1001. The segment at 1293-1608 (TTTVQKVVRE…PRKVLNVVLP (316 aa)) is product template (PT) domain. Positions 1297 to 1428 (QKVVREEVKG…CKVFFGDNEE (132 aa)) are N-terminal hotdog fold. One can recognise a PKS/mFAS DH domain in the interval 1297-1604 (QKVVREEVKG…FQAIPRKVLN (308 aa)). The active-site Proton acceptor; for dehydratase activity is histidine 1329. The C-terminal hotdog fold stretch occupies residues 1455–1604 (DASKIGRGLA…FQAIPRKVLN (150 aa)). Aspartate 1516 (proton donor; for dehydratase activity) is an active-site residue. Carrier domains are found at residues 1653-1730 (LTKN…AQFE) and 1779-1856 (GNVS…GIED). Serine 1690 is modified (O-(pantetheine 4'-phosphoryl)serine). The interval 1738-1782 (EENAHSSASSDSADMETESNFTTPSDDSEKDEVKGDAPAADGNVS) is disordered. Position 1816 is an O-(pantetheine 4'-phosphoryl)serine (serine 1816). Residues 1855 to 1892 (EDKPKRAAPKSAKQEPAKPEPKVQGEAKAHTNPVDNYP) form a disordered region. Over residues 1866–1883 (AKQEPAKPEPKVQGEAKA) the composition is skewed to basic and acidic residues. A thioesterase (TE) domain region spans residues 1911-2041 (QLFMIPDGSG…LGEGDDAEAK (131 aa)).

The protein operates within pigment biosynthesis; melanin biosynthesis. Its function is as follows. Non-reducing polyketide synthase; part of the gene cluster that mediates the biosynthesis of dihydroxynaphthalene (DHN)-melanin, a bluish-green pigment forming a dark layer in the conidial wall that protects the conidia from UV radiations. The first step of the pathway is the production of the pentaketide 1,3,6,8-tetrahydroxynaphthalene (1,3,6,8-THN or T4HN) by the polyketide synthase PfmaE though condensation of acetyl-CoA with malonyl-CoA. T4HN is not stable and easily oxidizes into the stable form flaviolin. T4HN is also substrate of the hydroxynaphthalene reductase PfmaG to yield scytalone. The scytalone dehydratase PfmaJ then reduces scytalone to 1,3,8-THN. 1,3,8-THN is then substrate of the hydroxynaphthalene reductase PfmaI to yield vermelone. Vermelone is further converted by the multicopper oxidase PfmaD to 1,8-DHN. Finally the laccase PFICI_06862 transforms 1,8-DHN to DHN-melanin. The roles of the 5-oxoprolinase PfmaA and the proline iminopeptidase PfmaB within the cluster have not been elucidated yet. This chain is Conidial pigment polyketide synthase PfmaE, found in Pestalotiopsis fici (strain W106-1 / CGMCC3.15140).